Consider the following 340-residue polypeptide: Glyceraldehyde-3-phosphate dehydrogenase (340 aa).

Residues 11-12 (TI) and glycine 109 contribute to the NAD(+) site. 138 to 140 (SCN) provides a ligand contact to D-glyceraldehyde 3-phosphate. The active-site Nucleophile is the cysteine 139. Residue arginine 167 coordinates NAD(+). 193 to 194 (HA) is a D-glyceraldehyde 3-phosphate binding site. An NAD(+)-binding site is contributed by glutamine 300.

The protein belongs to the glyceraldehyde-3-phosphate dehydrogenase family. As to quaternary structure, homotetramer.

Its subcellular location is the cytoplasm. It carries out the reaction D-glyceraldehyde 3-phosphate + phosphate + NADP(+) = (2R)-3-phospho-glyceroyl phosphate + NADPH + H(+). The catalysed reaction is D-glyceraldehyde 3-phosphate + phosphate + NAD(+) = (2R)-3-phospho-glyceroyl phosphate + NADH + H(+). It participates in carbohydrate degradation; glycolysis; pyruvate from D-glyceraldehyde 3-phosphate: step 1/5. In Saccharolobus islandicus (strain M.14.25 / Kamchatka #1) (Sulfolobus islandicus), this protein is Glyceraldehyde-3-phosphate dehydrogenase.